The following is a 111-amino-acid chain: uncharacterized protein (111 aa).

The chain crosses the membrane as a helical span at residues 27–47 (HLFHFPSISFFFFFFFFFFSF).

It localises to the membrane. This is an uncharacterized protein from Saccharomyces cerevisiae (strain ATCC 204508 / S288c) (Baker's yeast).